A 268-amino-acid polypeptide reads, in one-letter code: Xyloglucan endotransglucosylase protein 7 (268 aa).

Residues 1-196 (MNAEGGNLHR…WTKAPFTASY (196 aa)) enclose the GH16 domain. Glu82 acts as the Nucleophile in catalysis. Catalysis depends on Glu86, which acts as the Proton donor. Xyloglucan is bound at residue Glu86. An N-linked (GlcNAc...) asparagine glycan is attached at Asn90. Residues 99 to 101 (HTN), 109 to 111 (NRE), 175 to 176 (DW), and Gly180 each bind xyloglucan. 2 cysteine pairs are disulfide-bonded: Cys204–Cys213 and Cys251–Cys265. Xyloglucan is bound at residue Arg256.

Belongs to the glycosyl hydrolase 16 family. XTH group 2 subfamily. Post-translationally, contains at least one intrachain disulfide bond essential for its enzymatic activity. Expressed at a very high level in flowers and stems (picked at anthesis), and at a lower level in ripe leaves and fruits.

Its subcellular location is the cytoplasm. It carries out the reaction breaks a beta-(1-&gt;4) bond in the backbone of a xyloglucan and transfers the xyloglucanyl segment on to O-4 of the non-reducing terminal glucose residue of an acceptor, which can be a xyloglucan or an oligosaccharide of xyloglucan.. In terms of biological role, catalyzes xyloglucan endotransglycosylation (XET). Cleaves and religates xyloglucan polymers. Does not catalyze xyloglucan endohydrolysis (XEH). Probably involved in cell wall assembly and synthesis in fast growing tissues and in the maintenance of firmness in mature fruits. This chain is Xyloglucan endotransglucosylase protein 7, found in Diospyros kaki (Kaki persimmon).